The following is a 489-amino-acid chain: NADH-quinone oxidoreductase subunit N (489 aa).

14 consecutive transmembrane segments (helical) span residues 15-35 (APLL…VFFI), 44-64 (GYLA…LWGV), 78-98 (FALT…TMSL), 106-126 (IEQG…ILLA), 131-151 (LIVL…LTGF), 166-186 (LVLG…IFGA), 209-229 (LTLL…KVAL), 244-264 (PTPV…AALV), 278-298 (WLPV…LGAV), 306-326 (MLAY…MVAG), 333-353 (AFLF…AVLI), 378-398 (LAVA…MAGF), 412-432 (GLPW…FFYL), and 459-479 (IALA…VFAL).

Belongs to the complex I subunit 2 family. In terms of assembly, NDH-1 is composed of 14 different subunits. Subunits NuoA, H, J, K, L, M, N constitute the membrane sector of the complex.

The protein localises to the cell membrane. The enzyme catalyses a quinone + NADH + 5 H(+)(in) = a quinol + NAD(+) + 4 H(+)(out). In terms of biological role, NDH-1 shuttles electrons from NADH, via FMN and iron-sulfur (Fe-S) centers, to quinones in the respiratory chain. The immediate electron acceptor for the enzyme in this species is believed to be ubiquinone. Couples the redox reaction to proton translocation (for every two electrons transferred, four hydrogen ions are translocated across the cytoplasmic membrane), and thus conserves the redox energy in a proton gradient. The chain is NADH-quinone oxidoreductase subunit N from Chloroflexus aggregans (strain MD-66 / DSM 9485).